A 316-amino-acid polypeptide reads, in one-letter code: MNQLDALKQYTTVVADTGDFKQLAQFQPQDATTNPSLILKAVQKPEYAPLLKDCVTRWHGRAIDELMDRLIVRFGCEILSIIPGRVSTEVDARLSFDTAATVARAERIVELYQAEGLHIDRVLIKIAATWEGIQAARQLEQRGIHTNLTLLFSFAQAVACGQAKVQLISPFVGRIYDWYKKQAGANWDEAAMAGANDPGVQSVRAIYNHYKHFGIGTEVMGASFRNTGQIVALAGCDLLTIAPELLAQLAASDAPVARVLDPEAARRVALQPVQYDEAGFRYALNADAMATEKLAEGIRAFAADAAKLEQLMQAAA.

Residue Lys-125 is the Schiff-base intermediate with substrate of the active site.

Belongs to the transaldolase family. Type 1 subfamily. In terms of assembly, homodimer.

The protein resides in the cytoplasm. The enzyme catalyses D-sedoheptulose 7-phosphate + D-glyceraldehyde 3-phosphate = D-erythrose 4-phosphate + beta-D-fructose 6-phosphate. Its pathway is carbohydrate degradation; pentose phosphate pathway; D-glyceraldehyde 3-phosphate and beta-D-fructose 6-phosphate from D-ribose 5-phosphate and D-xylulose 5-phosphate (non-oxidative stage): step 2/3. In terms of biological role, transaldolase is important for the balance of metabolites in the pentose-phosphate pathway. This is Transaldolase from Acidovorax ebreus (strain TPSY) (Diaphorobacter sp. (strain TPSY)).